A 263-amino-acid polypeptide reads, in one-letter code: 4-hydroxy-2-oxo-heptane-1,7-dioate aldolase (263 aa).

His45 (proton acceptor) is an active-site residue. Gln147 contacts substrate. Residue Glu149 coordinates a divalent metal cation. Residues Ala174 and Asp175 each coordinate substrate. Asp175 lines the a divalent metal cation pocket.

It belongs to the HpcH/HpaI aldolase family. In terms of assembly, homohexamer; trimer of dimers. A divalent metal cation serves as cofactor.

The enzyme catalyses 4-hydroxy-2-oxoheptanedioate = succinate semialdehyde + pyruvate. It functions in the pathway aromatic compound metabolism; 4-hydroxyphenylacetate degradation; pyruvate and succinate semialdehyde from 4-hydroxyphenylacetate: step 7/7. In terms of biological role, catalyzes the reversible retro-aldol cleavage of 4-hydroxy-2-ketoheptane-1,7-dioate (HKHD) to pyruvate and succinic semialdehyde. This is 4-hydroxy-2-oxo-heptane-1,7-dioate aldolase from Salmonella typhimurium (strain LT2 / SGSC1412 / ATCC 700720).